A 240-amino-acid chain; its full sequence is Sec-independent protein translocase protein TatC (240 aa).

6 helical membrane-spanning segments follow: residues 15-35 (IISIIAFLIGSGIAFYFAKYV), 61-81 (LFILIKISLAVGFIIASPVIL), 103-123 (LLLGSILLFMLGALFAYFIVL), 152-172 (FVLKLVVAFGIAFEMPIVLYV), 191-211 (FIVIAFVIGAIIAPDVSTQVL), and 212-232 (MAIPLLLLYEISIFLGKLATR).

This sequence belongs to the TatC family. Forms a complex with TatA.

The protein resides in the cell inner membrane. Functionally, part of the twin-arginine translocation (Tat) system that transports large folded proteins containing a characteristic twin-arginine motif in their signal peptide across membranes. The chain is Sec-independent protein translocase protein TatC from Aquifex aeolicus (strain VF5).